Here is a 403-residue protein sequence, read N- to C-terminus: Argininosuccinate synthase (403 aa).

Alanine 10 to serine 18 provides a ligand contact to ATP. Tyrosine 87 lines the L-citrulline pocket. Residue glycine 117 participates in ATP binding. L-aspartate-binding residues include threonine 119, asparagine 123, and aspartate 124. An L-citrulline-binding site is contributed by asparagine 123. The L-citrulline site is built by arginine 127, serine 175, serine 184, glutamate 260, and tyrosine 272.

This sequence belongs to the argininosuccinate synthase family. Type 1 subfamily. In terms of assembly, homotetramer.

It is found in the cytoplasm. The catalysed reaction is L-citrulline + L-aspartate + ATP = 2-(N(omega)-L-arginino)succinate + AMP + diphosphate + H(+). Its pathway is amino-acid biosynthesis; L-arginine biosynthesis; L-arginine from L-ornithine and carbamoyl phosphate: step 2/3. This is Argininosuccinate synthase from Bacillus licheniformis (strain ATCC 14580 / DSM 13 / JCM 2505 / CCUG 7422 / NBRC 12200 / NCIMB 9375 / NCTC 10341 / NRRL NRS-1264 / Gibson 46).